The primary structure comprises 333 residues: Serine/threonine-protein phosphatase PP1-beta (333 aa).

Mn(2+) is bound by residues Asp63, His65, Asp91, and Asn123. The active-site Proton donor is His124. Residues His172 and His247 each contribute to the Mn(2+) site. Residues 306 to 333 (GAGGVGSNRPVTPPRNAPAAQPKKGAKK) form a disordered region. A compositionally biased stretch (low complexity) spans 322–333 (APAAQPKKGAKK).

It belongs to the PPP phosphatase family. PP-1 subfamily. Interacts with lab-1; the interaction is direct. Interacts with knl-1; the interaction is direct. Requires Mn(2+) as cofactor.

It is found in the cytoplasm. The protein localises to the nucleus. It carries out the reaction O-phospho-L-seryl-[protein] + H2O = L-seryl-[protein] + phosphate. It catalyses the reaction O-phospho-L-threonyl-[protein] + H2O = L-threonyl-[protein] + phosphate. Functionally, serine/threonine-protein phosphatase essential for chromosomal dynamics during meiosis and mitosis. Antagonizes the function of air-2 in the regulation of chromosome cohesion. Dephosphorylates histone H3 at 'Ser-10'. Also involved in the activation of chloride channel clh-3 during cell swelling and meiotic maturation. Essential for embryogenesis. In Caenorhabditis briggsae, this protein is Serine/threonine-protein phosphatase PP1-beta (gsp-2).